A 287-amino-acid polypeptide reads, in one-letter code: Diphthine methyl ester synthase (287 aa).

S-adenosyl-L-methionine-binding positions include L9, D84, G87, 112–113 (SI), V163, V221, and H248.

This sequence belongs to the diphthine synthase family.

The protein resides in the cytoplasm. The catalysed reaction is 2-[(3S)-amino-3-carboxypropyl]-L-histidyl-[translation elongation factor 2] + 4 S-adenosyl-L-methionine = diphthine methyl ester-[translation elongation factor 2] + 4 S-adenosyl-L-homocysteine + 3 H(+). Its pathway is protein modification; peptidyl-diphthamide biosynthesis. Its function is as follows. S-adenosyl-L-methionine-dependent methyltransferase that catalyzes four methylations of the modified target histidine residue in translation elongation factor 2 (EF-2), to form an intermediate called diphthine methyl ester. The four successive methylation reactions represent the second step of diphthamide biosynthesis. This is Diphthine methyl ester synthase (DPH5) from Gibberella zeae (strain ATCC MYA-4620 / CBS 123657 / FGSC 9075 / NRRL 31084 / PH-1) (Wheat head blight fungus).